Reading from the N-terminus, the 341-residue chain is Galactofuranose transporter permease protein YtfT (341 aa).

Residues 1–25 (MMPQSLPDTTTPKRRFRWPTGMPQL) lie on the Cytoplasmic side of the membrane. A helical membrane pass occupies residues 26 to 46 (VALLLVLLVDSLVAPHFWQVV). Residues 47-65 (LQDGRLFGSPIDILNRAAP) lie on the Periplasmic side of the membrane. The next 2 membrane-spanning stretches (helical) occupy residues 66-86 (VALL…DLSV) and 87-107 (GAVM…GFSL). A topological domain (periplasmic) is located at residue Pro108. The helical transmembrane segment at 109–129 (IVLLSALGTGILAGLWNGILV) threads the bilayer. The Cytoplasmic portion of the chain corresponds to 130-136 (AILKIQP). The helical transmembrane segment at 137-157 (FVATLILMVAGRGVAQLITAG) threads the bilayer. At 158–174 (QIVTFNSPDLSWFGSGS) the chain is on the periplasmic side. Residues 175–195 (LLFLPTPVIIAVLTLILFWLL) traverse the membrane as a helical segment. Over 196-223 (TRKTALGMFIEAVGINIRAAKNAGVNTR) the chain is Cytoplasmic. Residues 224-244 (IIVMLTYVLSGLCAAIAGIIV) traverse the membrane as a helical segment. The Periplasmic segment spans residues 245 to 255 (AADIRGADANN). A helical membrane pass occupies residues 256–276 (AGLWLELDAILAVVIGGGSLM). Residues 277–281 (GGRFN) lie on the Cytoplasmic side of the membrane. 2 helical membrane-spanning segments follow: residues 282–302 (LLLS…ILLS) and 303–323 (GFPP…VLIV). Over 324 to 341 (QSQRFISLIKGVRSRDKT) the chain is Cytoplasmic.

The protein belongs to the binding-protein-dependent transport system permease family. AraH/RbsC subfamily. The complex is composed of two ATP-binding proteins (YtfR), two transmembrane proteins (YtfT and YjfF) and a solute-binding protein (YtfQ).

The protein resides in the cell inner membrane. Functionally, part of the ABC transporter complex YtfQRT-YjfF involved in galactofuranose transport. Probably responsible for the translocation of the substrate across the membrane. The protein is Galactofuranose transporter permease protein YtfT (ytfT) of Escherichia coli (strain K12).